We begin with the raw amino-acid sequence, 353 residues long: DNA-repair protein XRCC1 (353 aa).

The segment covering 1–12 (MSQKRNLPSWMS) has biased composition (polar residues). The interval 1–57 (MSQKRNLPSWMSSRDPEITPSKSHCKKPKDEGPTEEHNSRNAPSNKSEHAEPSSNTT) is disordered. Positions 28-39 (PKDEGPTEEHNS) are enriched in basic and acidic residues. Residues 58–146 (EFSKLMEGVV…KLVDIEQYLM (89 aa)) form the BRCT 1 domain. The tract at residues 150–194 (KPWRKSSSPQDANREKREHLSKKPEKQVEKKTETRGTPSTSSKNR) is disordered. Basic and acidic residues predominate over residues 161-183 (ANREKREHLSKKPEKQVEKKTET). The segment covering 184–194 (RGTPSTSSKNR) has biased composition (polar residues). Positions 240–260 (AAEGVLTCLQDAIDSLEQKQD) form a coiled coil. A BRCT 2 domain is found at 266–347 (ELWSFVPRVV…EEEIELAYRN (82 aa)).

Homodimer. Interacts with polynucleotide kinase (PNK), DNA polymerase-beta (POLB) and DNA ligase III (LIG3). Interacts with ZDP and ROS1. Binds to various forms of double-stranded DNA (e.g. methylated, unmethylated, with single-nucleotide gap flanked by 3'-phosphate or 5'-phosphate ends).

It localises to the nucleus. Corrects defective DNA strand-break repair and sister chromatid exchange following treatment with ionizing radiation and alkylating agents. Involved in DNA demethylation pathway by stimulating cytosine methylation (5-meC) excision, gap tailoring, and DNA ligation. The protein is DNA-repair protein XRCC1 of Arabidopsis thaliana (Mouse-ear cress).